The following is a 24-amino-acid chain: Brevinin-1JDc (24 aa).

A disulfide bond links C18 and C24.

As to expression, expressed by the skin glands.

The protein localises to the secreted. Has antibacterial activity against E.coli ATCC 25992 (MIC=49 uM), E.coli CIB 84492 (MIC=25 uM), S.aureus ATCC 25923 (MIC=6 uM) and S.aureus CIB 85462 (MIC=3 uM). In Odorrana jingdongensis (Jingdong frog), this protein is Brevinin-1JDc.